The primary structure comprises 947 residues: Cell adhesion molecule CEACAM5 (947 aa).

Residues 1 to 34 form the signal peptide; sequence MEASSVLPCKWCTHLQGLLLTASFLTCCHLPTTA. Ig-like V-type domains lie at 35-132, 166-259, 270-378, 392-498, 509-615, 642-733, and 746-851; these read QITI…EIVS, SEGG…VQLY, PLQV…LHVN, RLSI…LQLD, QVKI…LHVN, GESV…VQLQ, and DQLI…VQVH. N57, N103, N110, N207, N224, N341, N461, N472, N578, N698, N709, N816, and N823 each carry an N-linked (GlcNAc...) asparagine glycan. One can recognise an Ig-like C2-type 1 domain in the interval 859 to 943; it reads PFVRVTDTTV…SKSSLPVRLA (85 aa). Cysteines 878 and 926 form a disulfide.

It belongs to the immunoglobulin superfamily. CEA family. As to quaternary structure, homodimer.

It is found in the cell membrane. It localises to the apical cell membrane. The protein resides in the cell surface. In terms of biological role, cell surface glycoprotein that plays a role in cell adhesion, intracellular signaling and tumor progression. Mediates homophilic and heterophilic cell adhesion with other carcinoembryonic antigen-related cell adhesion molecules, such as CEACAM6. Plays a role as an oncogene by promoting tumor progression; induces resistance to anoikis of colorectal carcinoma cells. This chain is Cell adhesion molecule CEACAM5, found in Mus musculus (Mouse).